The chain runs to 142 residues: NTF2-related export protein 2 (142 aa).

The NTF2 domain maps to 17–136 (AAEEFVNIYY…WKIASDCFRF (120 aa)).

In terms of assembly, associates with NXF1, NXF2, NXF3 and NXF5.

The protein localises to the nucleus. The protein resides in the cytoplasm. Functionally, regulator of protein export for NES-containing proteins. Also plays a role in mRNA nuclear export. This is NTF2-related export protein 2 (Nxt2) from Mus musculus (Mouse).